Consider the following 103-residue polypeptide: Co-chaperonin GroES (103 aa).

The protein belongs to the GroES chaperonin family. Heptamer of 7 subunits arranged in a ring. Interacts with the chaperonin GroEL.

It localises to the cytoplasm. Functionally, together with the chaperonin GroEL, plays an essential role in assisting protein folding. The GroEL-GroES system forms a nano-cage that allows encapsulation of the non-native substrate proteins and provides a physical environment optimized to promote and accelerate protein folding. GroES binds to the apical surface of the GroEL ring, thereby capping the opening of the GroEL channel. This is Co-chaperonin GroES from Nostoc punctiforme (strain ATCC 29133 / PCC 73102).